The chain runs to 257 residues: Imidazole glycerol phosphate synthase subunit HisF (257 aa).

Active-site residues include Asp12 and Asp131.

The protein belongs to the HisA/HisF family. Heterodimer of HisH and HisF.

The protein resides in the cytoplasm. The enzyme catalyses 5-[(5-phospho-1-deoxy-D-ribulos-1-ylimino)methylamino]-1-(5-phospho-beta-D-ribosyl)imidazole-4-carboxamide + L-glutamine = D-erythro-1-(imidazol-4-yl)glycerol 3-phosphate + 5-amino-1-(5-phospho-beta-D-ribosyl)imidazole-4-carboxamide + L-glutamate + H(+). Its pathway is amino-acid biosynthesis; L-histidine biosynthesis; L-histidine from 5-phospho-alpha-D-ribose 1-diphosphate: step 5/9. IGPS catalyzes the conversion of PRFAR and glutamine to IGP, AICAR and glutamate. The HisF subunit catalyzes the cyclization activity that produces IGP and AICAR from PRFAR using the ammonia provided by the HisH subunit. The chain is Imidazole glycerol phosphate synthase subunit HisF from Cellvibrio japonicus (strain Ueda107) (Pseudomonas fluorescens subsp. cellulosa).